The sequence spans 392 residues: F-box only protein 5-A (392 aa).

The segment at 1–21 (MMCGFASNQSPKKLSSKKSSA) is disordered. Low complexity predominate over residues 7–20 (SNQSPKKLSSKKSS). An F-box domain is found at 197–244 (AELFHRDFKHLLTKILRHLSAMDLINVISVSTTWRKLLQKDNWAYNAY). The ZBR-type zinc-finger motif lies at 319–367 (SLKVCVDCGSPAKHDPCLHRAICTRESCKLDFCTRCSCKYHFSKSCLMS). 8 residues coordinate Zn(2+): cysteine 323, cysteine 326, cysteine 341, cysteine 346, cysteine 351, cysteine 354, histidine 359, and cysteine 364.

Part of a SCF (SKP1-cullin-F-box) protein ligase complex. Interacts with btrc. Interacts with skp1. Interacts with cdc20. Interacts with pin1; stabilizes fbxo5 by preventing its association with btrc in an isomerization-dependent pathway; this interaction is present during G2 phase and prevents fbxo5 degradation. Interacts with plk1. In terms of processing, proteolysed; proteolysis is induced by both cyclin B-cdk1 and cyclin A-cdk1/2 complex through probable phosphorylation. Proteolysis is inhibited by pin1 during G2.

The protein resides in the nucleus. It localises to the cytoplasm. The protein localises to the cytoskeleton. Its subcellular location is the spindle. It is found in the microtubule organizing center. The protein resides in the centrosome. Its pathway is protein modification; protein ubiquitination. Regulates progression through early mitosis by inhibiting the anaphase promoting complex/cyclosome (APC). Binds to the APC activator cdc20 to prevent APC activation. Can also bind directly to the APC to inhibit substrate-binding. Required to arrest unfertilized eggs at metaphase of meiosis II, by preventing their release from metaphase of meiosis II, through inhibition of APC-dependent cyclin B destruction leading to stabilization of cyclin B-cdk1 complex activity. The chain is F-box only protein 5-A (fbxo5-a) from Xenopus laevis (African clawed frog).